The primary structure comprises 305 residues: N-acetylglucosamine-1-phosphotransferase subunit gamma (305 aa).

The N-terminal stretch at M1–A24 is a signal peptide. The MRH domain occupies G69 to P171. Cysteines 71 and 84 form a disulfide. 2 N-linked (GlcNAc...) asparagine glycosylation sites follow: N88 and N115. Cystine bridges form between C129–C157 and C142–C169. Residues V176–L279 enclose the DMAP1-binding domain. The disordered stretch occupies residues G267–L305. Residues H281–R296 show a composition bias toward basic and acidic residues.

As to quaternary structure, homodimer; disulfide-linked. Hexamer of two alpha (GNPTAB), two beta (GNPTAB) and two gamma (GNPTG) subunits; disulfide-linked. The alpha and/or the beta subunits of the enzyme constitute the catalytic subunits. In terms of processing, cys-245 mediates the formation of the interchain disulfide bond for formation of the homodimer. Cys-142, Cys-157 and Cys-169 are involved in intramolecular disulfide bonds formation. In terms of tissue distribution, widely expressed.

Its subcellular location is the secreted. The protein resides in the golgi apparatus. Its function is as follows. Non-catalytic subunit of the N-acetylglucosamine-1-phosphotransferase complex, an enzyme that catalyzes the formation of mannose 6-phosphate (M6P) markers on high mannose type oligosaccharides in the Golgi apparatus. Binds and presents the high mannose glycans of the acceptor to the catalytic alpha and beta subunits (GNPTAB). Enhances the rate of N-acetylglucosamine-1-phosphate transfer to the oligosaccharides of acid hydrolase acceptors. The protein is N-acetylglucosamine-1-phosphotransferase subunit gamma (GNPTG) of Homo sapiens (Human).